The primary structure comprises 152 residues: Large ribosomal subunit protein uL30 (152 aa).

Belongs to the universal ribosomal protein uL30 family. Part of the 50S ribosomal subunit.

This is Large ribosomal subunit protein uL30 from Methanosphaera stadtmanae (strain ATCC 43021 / DSM 3091 / JCM 11832 / MCB-3).